We begin with the raw amino-acid sequence, 222 residues long: Thiol:disulfide interchange protein DsbL (222 aa).

The N-terminal stretch at 1–27 (MSAKWINSIFKSVVLTAALALPFTASA) is a signal peptide. The 194-residue stretch at 28–221 (FTEGTDYMVL…MAQLVRELAT (194 aa)) folds into the Thioredoxin domain. Residues Cys56 and Cys59 are joined by a disulfide bond.

Belongs to the thioredoxin family. DsbL subfamily. In terms of assembly, interacts with DsbI.

It is found in the periplasm. Its function is as follows. Involved in disulfide-bond formation. Acts by transferring its disulfide bond to other proteins. Part of a redox system composed of DsbI and DsbL that mediates formation of an essential disulfide bond in AssT. This Lelliottia amnigena (Enterobacter amnigenus) protein is Thiol:disulfide interchange protein DsbL.